Reading from the N-terminus, the 332-residue chain is Fructose-1,6-bisphosphatase class 1 (332 aa).

The Mg(2+) site is built by Glu89, Asp110, Leu112, and Asp113. Substrate is bound by residues 113–116 (DGSS), Asn206, Tyr239, 257–259 (YLY), and Lys269. Position 275 (Glu275) interacts with Mg(2+).

This sequence belongs to the FBPase class 1 family. Homotetramer. Mg(2+) is required as a cofactor.

It localises to the cytoplasm. It carries out the reaction beta-D-fructose 1,6-bisphosphate + H2O = beta-D-fructose 6-phosphate + phosphate. It participates in carbohydrate biosynthesis; gluconeogenesis. The sequence is that of Fructose-1,6-bisphosphatase class 1 from Klebsiella pneumoniae subsp. pneumoniae (strain ATCC 700721 / MGH 78578).